The primary structure comprises 807 residues: Glycerol-3-phosphate acyltransferase (807 aa).

An HXXXXD motif motif is present at residues 305 to 310 (CHRSHM).

Belongs to the GPAT/DAPAT family.

It localises to the cell inner membrane. It carries out the reaction sn-glycerol 3-phosphate + an acyl-CoA = a 1-acyl-sn-glycero-3-phosphate + CoA. It participates in phospholipid metabolism; CDP-diacylglycerol biosynthesis; CDP-diacylglycerol from sn-glycerol 3-phosphate: step 1/3. This is Glycerol-3-phosphate acyltransferase from Aliivibrio salmonicida (strain LFI1238) (Vibrio salmonicida (strain LFI1238)).